The chain runs to 5087 residues: Nonribosomal peptide synthetase sidC (5087 aa).

Residues His165–Ile563 are adenylation 1. Residues Glu671–Gln744 form the Carrier 1 domain. Ser705 is subject to O-(pantetheine 4'-phosphoryl)serine. The condensation 1 stretch occupies residues Asp782 to Asp1112. Residues Glu1217–Arg1611 are adenylation 2. One can recognise a Carrier 2 domain in the interval Glu1740–Ile1817. Ser1777 carries the post-translational modification O-(pantetheine 4'-phosphoryl)serine. The condensation 2 stretch occupies residues Lys1855 to Ser2272. One can recognise a Carrier 3 domain in the interval Glu2302 to Lys2378. Ser2339 carries the post-translational modification O-(pantetheine 4'-phosphoryl)serine. Residues Pro2419 to Ser2831 are condensation 3. An adenylation 3 region spans residues Ala2860 to Arg3258. The Carrier 4 domain occupies Thr3387–Asp3464. Ser3424 is modified (O-(pantetheine 4'-phosphoryl)serine). Residues Ile3506–Asn3910 are condensation 4. Positions Phe3943–Gly4019 constitute a Carrier 5 domain. Ser3980 is subject to O-(pantetheine 4'-phosphoryl)serine. The segment at Glu4051–Ala4416 is condensation 5. A Carrier 6 domain is found at Ser4496–Arg4569. The residue at position 4530 (Ser4530) is an O-(pantetheine 4'-phosphoryl)serine. The interval Phe4610–Ser4913 is condensation 6. The interval Asp5013–Ala5048 is disordered.

The protein belongs to the NRP synthetase family.

Its pathway is siderophore biosynthesis. In terms of biological role, nonribosomal peptide synthetase; part of the siderophore biosynthetic pathway. Arthroderma benhamiae produces 2 types of extracellular siderophores, ferrichrome C and ferricrocin. The biosynthesis of these siderophores depends on the hydroxylation of ornithine to N(5)-hydroxyornithine, catalyzed by the monooxygenase sidA. The structure of ferricrocin differs from ferrichrome C only by a serine for alanine substitution and the assembly of both siderophores is suggested to be performed by the nonribosomal peptide synthase (NRPS) sidC. The polypeptide is Nonribosomal peptide synthetase sidC (Arthroderma benhamiae (strain ATCC MYA-4681 / CBS 112371) (Trichophyton mentagrophytes)).